The following is a 213-amino-acid chain: MAMKASIKGKYDTDKTSGIGSLAFNAGDIKLRATMTDATLVAGPTLTGLALAVEKPGSFIVEYNVPKKDVRFQFMNTVRIAEKPLNLTYIHSRADNRTIVDGSLVIDSANKLSANHMVGTNNCKIKYTYAHGGLATFEPCYDLAKNTWDFAVSRRFYSGDNVRATYQTSSKLLGMEWSRNNKASGFKVCASVNLADELKTPKLTAETTWNLEM.

At 1–3 (MAM) the chain is on the cytoplasmic side. A beta stranded transmembrane segment spans residues 4 to 13 (KASIKGKYDT). Over 14–18 (DKTSG) the chain is Chloroplast intermembrane. A beta stranded transmembrane segment spans residues 19 to 28 (IGSLAFNAGD). Topologically, residues 29–32 (IKLR) are cytoplasmic. A beta stranded transmembrane segment spans residues 33 to 42 (ATMTDATLVA). Over 43–55 (GPTLTGLALAVEK) the chain is Chloroplast intermembrane. The beta stranded transmembrane segment at 56-64 (PGSFIVEYN) threads the bilayer. Residues 65–70 (VPKKDV) lie on the Cytoplasmic side of the membrane. The chain crosses the membrane as a beta stranded span at residues 71–80 (RFQFMNTVRI). The Chloroplast intermembrane segment spans residues 81-93 (AEKPLNLTYIHSR). A beta stranded transmembrane segment spans residues 94 to 103 (ADNRTIVDGS). At 104–108 (LVIDS) the chain is on the cytoplasmic side. Residues 109–118 (ANKLSANHMV) form a beta stranded membrane-spanning segment. Residues 119–122 (GTNN) are Chloroplast intermembrane-facing. A beta stranded membrane pass occupies residues 123 to 132 (CKIKYTYAHG). Topologically, residues 133 to 144 (GLATFEPCYDLA) are cytoplasmic. A beta stranded transmembrane segment spans residues 145-156 (KNTWDFAVSRRF). Topologically, residues 157–159 (YSG) are chloroplast intermembrane. A beta stranded transmembrane segment spans residues 160 to 168 (DNVRATYQT). Residues 169–170 (SS) are Cytoplasmic-facing. Residues 171 to 179 (KLLGMEWSR) form a beta stranded membrane-spanning segment. Residues 180-201 (NNKASGFKVCASVNLADELKTP) are Chloroplast intermembrane-facing. A beta stranded membrane pass occupies residues 202–211 (KLTAETTWNL). Topologically, residues 212 to 213 (EM) are cytoplasmic.

It belongs to the plastid outer envelope porin OEP24 (TC 1.B.28) family. Homooligomers form large rather nonselective pores in plastidial outer membranes.

The protein resides in the plastid. The protein localises to the etioplast membrane. Its subcellular location is the chloroplast outer membrane. High-conductance voltage-dependent solute channel with a slight selectivity for cations transporting triosephosphates, dicarboxylic acids, ATP, inorganic phosphate (Pi), sugars, and positively or negatively charged amino acids. The protein is Outer envelope pore protein 24B, chloroplastic (OEP24B) of Arabidopsis thaliana (Mouse-ear cress).